Reading from the N-terminus, the 350-residue chain is Protein-glutamate methylesterase/protein-glutamine glutaminase (350 aa).

The Response regulatory domain maps to K5 to V122. A 4-aspartylphosphate modification is found at D56. Residues P152–R346 form the CheB-type methylesterase domain. Residues S165, H191, and D288 contribute to the active site.

It belongs to the CheB family. Phosphorylated by CheA. Phosphorylation of the N-terminal regulatory domain activates the methylesterase activity.

It localises to the cytoplasm. It carries out the reaction [protein]-L-glutamate 5-O-methyl ester + H2O = L-glutamyl-[protein] + methanol + H(+). The enzyme catalyses L-glutaminyl-[protein] + H2O = L-glutamyl-[protein] + NH4(+). In terms of biological role, involved in chemotaxis. Part of a chemotaxis signal transduction system that modulates chemotaxis in response to various stimuli. Catalyzes the demethylation of specific methylglutamate residues introduced into the chemoreceptors (methyl-accepting chemotaxis proteins or MCP) by CheR. Also mediates the irreversible deamidation of specific glutamine residues to glutamic acid. The chain is Protein-glutamate methylesterase/protein-glutamine glutaminase from Bordetella bronchiseptica (strain ATCC BAA-588 / NCTC 13252 / RB50) (Alcaligenes bronchisepticus).